The primary structure comprises 170 residues: 4-hydroxyphenylacetate 3-monooxygenase reductase component (170 aa).

The protein belongs to the non-flavoprotein flavin reductase family. HpaC subfamily. As to quaternary structure, monomer. HPA 3-hydroxylase consists of a reductase component HpaC and an oxygenase component HpaB. Some form of interactions between the reductase and the oxygenase facilitate the transfer of FADH(-) to the oxygenase in P.aeruginosa, although interactions are not required in other species.

It carries out the reaction FADH2 + NAD(+) = FAD + NADH + 2 H(+). The protein operates within aromatic compound metabolism; 4-hydroxyphenylacetate degradation; pyruvate and succinate semialdehyde from 4-hydroxyphenylacetate: step 1/7. The rate of FAD reduction is independent of the presence of HPA, demonstrating that, in contrast to HPAH from A.baumannii, the activity of the HPAH reductase is not allosterically regulated by the substrate. In terms of biological role, reductase component of the 4-hydroxyphenylacetate (HPA) 3-hydroxylase. Catalyzes the reduction of FAD by NADH. The reduced flavin is then transferred to the oxygenase component HpaB. Is also able to reduce FMN and riboflavin, but preferentially binds FAD. Has no activity with NADPH as the reductant. This chain is 4-hydroxyphenylacetate 3-monooxygenase reductase component, found in Pseudomonas aeruginosa (strain ATCC 15692 / DSM 22644 / CIP 104116 / JCM 14847 / LMG 12228 / 1C / PRS 101 / PAO1).